The chain runs to 231 residues: ATP-dependent dethiobiotin synthetase BioD (231 aa).

13 to 18 (DVGKTV) provides a ligand contact to ATP. Residue Thr-17 participates in Mg(2+) binding. The active site involves Lys-38. ATP-binding positions include Asp-55, 116–119 (EGAG), and 176–177 (NR). Residues Asp-55 and Glu-116 each contribute to the Mg(2+) site.

This sequence belongs to the dethiobiotin synthetase family. In terms of assembly, homodimer. The cofactor is Mg(2+).

The protein localises to the cytoplasm. The catalysed reaction is (7R,8S)-7,8-diammoniononanoate + CO2 + ATP = (4R,5S)-dethiobiotin + ADP + phosphate + 3 H(+). The protein operates within cofactor biosynthesis; biotin biosynthesis; biotin from 7,8-diaminononanoate: step 1/2. Catalyzes a mechanistically unusual reaction, the ATP-dependent insertion of CO2 between the N7 and N8 nitrogen atoms of 7,8-diaminopelargonic acid (DAPA, also called 7,8-diammoniononanoate) to form a ureido ring. The polypeptide is ATP-dependent dethiobiotin synthetase BioD (Vibrio cholerae serotype O1 (strain ATCC 39315 / El Tor Inaba N16961)).